We begin with the raw amino-acid sequence, 513 residues long: Probable G-protein coupled receptor 176 (513 aa).

Residues M1–A25 form a disordered region. The Extracellular segment spans residues M1–Q41. N-linked (GlcNAc...) asparagine glycosylation is found at N4, N11, N17, and N26. The helical transmembrane segment at F42–S64 threads the bilayer. At T65 to R77 the chain is on the cytoplasmic side. A helical transmembrane segment spans residues F78–I98. The Extracellular segment spans residues I99–W108. The helical transmembrane segment at W109 to V129 threads the bilayer. Topologically, residues T130–K157 are cytoplasmic. A helical transmembrane segment spans residues S158 to F177. Topologically, residues A178 to Y204 are extracellular. Residues V205–I225 form a helical membrane-spanning segment. Residues L226–H264 lie on the Cytoplasmic side of the membrane. The chain crosses the membrane as a helical span at residues A265–V285. At V286–L301 the chain is on the extracellular side. The helical transmembrane segment at L302 to V322 threads the bilayer. The Cytoplasmic segment spans residues N323–S513. The interval V404–V432 is disordered.

It belongs to the G-protein coupled receptor 1 family. Expressed in brain, lung, heart, stomach, intestine, cultured aortic smooth muscle cells and cardiac myocytes.

Its subcellular location is the cell membrane. In terms of biological role, orphan receptor involved in normal circadian rhythm behavior. Acts through the G-protein subclass G(z)-alpha and has an agonist-independent basal activity to repress cAMP production. This Rattus norvegicus (Rat) protein is Probable G-protein coupled receptor 176 (Gpr176).